We begin with the raw amino-acid sequence, 82 residues long: Protein RALF-like 8 (82 aa).

Residues 1–28 (MGMSKSIKVILSLALVVFLALAGTKVEA) form the signal peptide. Disulfide bonds link cysteine 47–cysteine 55 and cysteine 67–cysteine 73.

The protein belongs to the plant rapid alkalinization factor (RALF) family. In terms of tissue distribution, expressed in leaves and flowers.

Its subcellular location is the secreted. Cell signaling peptide that may regulate plant stress, growth, and development. Mediates a rapid alkalinization of extracellular space by mediating a transient increase in the cytoplasmic Ca(2+) concentration leading to a calcium-dependent signaling events through a cell surface receptor and a concomitant activation of some intracellular mitogen-activated protein kinases. The polypeptide is Protein RALF-like 8 (RALFL8) (Arabidopsis thaliana (Mouse-ear cress)).